Consider the following 1034-residue polypeptide: Integrin alpha-V (1034 aa).

The signal sequence occupies residues 1 to 19 (MAALRASLLLSCALTAARA). Residues 20-978 (FNLDAERPAV…WGIQPQPMPV (959 aa)) are Extracellular-facing. FG-GAP repeat units follow at residues 21–86 (NLDA…RNCQ), 97–158 (DFAP…VEYA), 161–213 (RSTT…LAKY), 225–279 (QLAT…GKNM), 280–345 (SSMY…GGFQ), 346–403 (IAKL…GLNA), and 407–470 (RILE…VNPT). Asparagine 62 is a glycosylation site (N-linked (GlcNAc...) asparagine). Cystine bridges form between cysteine 77–cysteine 85, cysteine 126–cysteine 146, and cysteine 160–cysteine 173. The Ca(2+) site is built by aspartate 248, aspartate 252, isoleucine 254, and aspartate 256. Residues asparagine 278 and asparagine 284 are each glycosylated (N-linked (GlcNAc...) asparagine). The Ca(2+) site is built by aspartate 302, asparagine 304, aspartate 306, tyrosine 308, aspartate 310, aspartate 367, aspartate 369, aspartate 371, phenylalanine 373, aspartate 375, aspartate 431, aspartate 433, asparagine 435, tyrosine 437, and aspartate 439. 2 disulfide bridges follow: cysteine 479–cysteine 488 and cysteine 494–cysteine 551. N-linked (GlcNAc...) asparagine glycosylation is found at asparagine 540 and asparagine 601. Cystine bridges form between cysteine 612–cysteine 618 and cysteine 684–cysteine 697. N-linked (GlcNAc...) asparagine glycans are attached at residues asparagine 690, asparagine 821, asparagine 837, and asparagine 860. 2 disulfides stabilise this stretch: cysteine 838–cysteine 900 and cysteine 890–cysteine 895. N-linked (GlcNAc...) asparagine glycans are attached at residues asparagine 931, asparagine 951, asparagine 959, and asparagine 966. The helical transmembrane segment at 979–1002 (PVWVIILAVLAGLLLLAVLVLVMY) threads the bilayer. At 1003-1034 (RMGFFKRVRPPQEEQEREQLQPHENGEGTSEA) the chain is on the cytoplasmic side. The short motif at 1005 to 1009 (GFFKR) is the GFFKR motif element. Positions 1013–1028 (PQEEQEREQLQPHENG) are enriched in basic and acidic residues. The segment at 1013–1034 (PQEEQEREQLQPHENGEGTSEA) is disordered.

It belongs to the integrin alpha chain family. Heterodimer of an alpha and a beta subunit. The alpha subunit is composed of a heavy and a light chain linked by a disulfide bond. Alpha-V (ITGAV) associates with either beta-1 (ITGB1), beta-3 (ITGB3), beta-5 (ITGB5), beta-6 (ITGB6) or beta-8 (ITGB8). Interacts with RAB25. Interacts with CIB1. Integrins ITGAV:ITGB3 and ITGAV:ITGB5 interact with FBLN5 (via N-terminus). ITGAV:ITGB3 and ITGAV:ITGB5 interact with CCN3. ITGAV:ITGB3 interacts with ADGRA2. ITGAV:ITGB3 interacts with FGF2; it is likely that FGF2 can simultaneously bind ITGAV:ITGB3 and FGF receptors. ITGAV:ITGB3 is found in a ternary complex with CX3CR1 and CX3CL1. ITGAV:ITGB3 is found in a ternary complex with NRG1 and ERBB3. ITGAV:ITGB3 is found in a ternary complex with FGF1 and FGFR1. ITGAV:ITGB3 is found in a ternary complex with IGF1 and IGF1R. ITGAV:ITGB3 interacts with IGF2. ITGAV:ITGB3 and ITGAV:ITGB6 interact with FBN1. ITGAV:ITGB3 interacts with CD9, CD81 and CD151 (via second extracellular domain). ITGAV:ITGB6 interacts with TGFB1.

The protein localises to the membrane. It localises to the cell junction. It is found in the focal adhesion. In terms of biological role, the alpha-V (ITGAV) integrins are receptors for vitronectin, cytotactin, fibronectin, fibrinogen, laminin, matrix metalloproteinase-2, osteopontin, osteomodulin, prothrombin, thrombospondin, TGFB1 and vWF. They recognize the sequence R-G-D in a wide array of ligands. Alpha-V integrins may play a role in embryo implantation, angiogenesis and wound healing. ITGAV:ITGB3 binds to fractalkine (CX3CL1) and may act as its coreceptor in CX3CR1-dependent fractalkine signaling. ITGAV:ITGB3 binds to NRG1 (via EGF domain) and this binding is essential for NRG1-ERBB signaling. ITGAV:ITGB3 binds to FGF1 and this binding is essential for FGF1 signaling. ITGAV:ITGB3 binds to FGF2 and this binding is essential for FGF2 signaling. ITGAV:ITGB3 binds to IGF1 and this binding is essential for IGF1 signaling. ITGAV:ITGB3 binds to IGF2 and this binding is essential for IGF2 signaling. ITGAV:ITGB3 binds to IL1B and this binding is essential for IL1B signaling. ITGAV:ITGB3 binds to PLA2G2A via a site (site 2) which is distinct from the classical ligand-binding site (site 1) and this induces integrin conformational changes and enhanced ligand binding to site 1. ITGAV:ITGB3 and ITGAV:ITGB6 act as receptors for fibrillin-1 (FBN1) and mediate R-G-D-dependent cell adhesion to FBN1. Integrin alpha-V/beta-6 or alpha-V/beta-8 (ITGAV:ITGB6 or ITGAV:ITGB8) mediates R-G-D-dependent release of transforming growth factor beta-1 (TGF-beta-1) from regulatory Latency-associated peptide (LAP), thereby playing a key role in TGF-beta-1 activation. ITGAV:ITGB3 acts as a receptor for CD40LG. ITGAV:ITGB3 acts as a receptor for IBSP and promotes cell adhesion and migration to IBSP. The protein is Integrin alpha-V (ITGAV) of Gallus gallus (Chicken).